A 392-amino-acid polypeptide reads, in one-letter code: Y' element ATP-dependent helicase YFL066C (392 aa).

The region spanning 1 to 175 (MADTPSVAVQ…LQRIGLTGLA (175 aa)) is the Helicase ATP-binding domain. 11–18 (APPGYGKT) is a binding site for ATP. Residues 232–381 (KLLLALFEIE…EFYGLESKKG (150 aa)) enclose the Helicase C-terminal domain.

It belongs to the helicase family. Yeast subtelomeric Y' repeat subfamily.

Functionally, catalyzes DNA unwinding and is involved in telomerase-independent telomere maintenance. This chain is Y' element ATP-dependent helicase YFL066C, found in Saccharomyces cerevisiae (strain ATCC 204508 / S288c) (Baker's yeast).